The following is a 1203-amino-acid chain: Cingulin (1203 aa).

The interval 7 to 357 is head; it reads MAEPRGPVDH…VMISSGSTKA (351 aa). Positions 25–48 are disordered; it reads EPVSGAEMGTLRRGGRRPAKDARA. The ZIM motif lies at 48-62; the sequence is ASTYGVAVRVQGIAG. Residues 54 to 67 form an interaction with TJP1/ZO1 region; sequence AVRVQGIAGQPFVV. Residues 89–268 form a disordered region; sequence EASGALGSDF…PPSGFSRSRQ (180 aa). 6 positions are modified to phosphoserine: Ser-96, Ser-135, Ser-137, Ser-140, Ser-155, and Ser-165. Residues 166–191 are compositionally biased toward polar residues; it reads PGSTIDTAPLSSVDSLINKFDSQLGG. A compositionally biased stretch (basic and acidic residues) spans 207–231; that stretch reads EQRKRSKSLDSRLPRDTLEERERQS. Phosphoserine occurs at positions 214, 217, 258, 276, 338, and 351. Residues 246 to 267 show a composition bias toward low complexity; it reads GSSKQPSQSQSPSPPSGFSRSR. Residues 358–1160 are a coiled coil; it reads VAGQGELTRK…SLEKDSWRKA (803 aa). At Lys-579 the chain carries N6-acetyllysine. The segment covering 883–903 has biased composition (basic and acidic residues); sequence ARREVADAQRQAKDWASEAEK. 2 disordered regions span residues 883-908 and 1160-1181; these read ARRE…SGGL and ASRS…EEFD. A tail region spans residues 1161-1203; sequence SRSAAESALKHEGLSSDEEFDSVYDPSSIASLLTESNLQTSSC. Phosphoserine occurs at positions 1175, 1176, and 1182.

It belongs to the cingulin family. In terms of assembly, homodimer. Interacts with TJP1/ZO1 and SPEF1.

The protein resides in the cell junction. It is found in the tight junction. Probably plays a role in the formation and regulation of the tight junction (TJ) paracellular permeability barrier. The chain is Cingulin from Papio anubis (Olive baboon).